Here is a 393-residue protein sequence, read N- to C-terminus: Ceramide synthase 4 (393 aa).

Residues 1–31 (MSFSLSEWLWQETYWLPPNVTWAELEDRDGL) lie on the Lumenal side of the membrane. Asn-19 carries N-linked (GlcNAc...) asparagine glycosylation. The helical transmembrane segment at 32 to 52 (VFAHPHHVLAAFPVALVLVAV) threads the bilayer. Positions 67 to 128 (WMGVQDPIRR…RRRRNQDRPS (62 aa)) are homeobox-like. The region spanning 131-332 (KKFCEACWRF…ILRMLYSFLH (202 aa)) is the TLC domain. The next 4 helical transmembrane spans lie at 140 to 160 (FVFY…ESWL), 179 to 199 (LYWW…TLPF), 217 to 237 (VGLI…VVLL), and 265 to 285 (FIMF…TQVI). The Last loop motif signature appears at 291–301 (DSIKNSGPFFG). Residues 304-324 (FFIVLLVMLQILHVYWFCLIL) traverse the membrane as a helical segment. Over 325–393 (RMLYSFLHKG…CLTNGHTRAT (69 aa)) the chain is Cytoplasmic. The tract at residues 341–393 (RSDVEEPDSSDDEPVSEGPQLKNGMARGSRVAVTNGPRSRAAACLTNGHTRAT) is disordered. 3 positions are modified to phosphoserine: Ser-342, Ser-349, and Ser-350. Residues 345–355 (EEPDSSDDEPV) show a composition bias toward acidic residues.

Post-translationally, phosphorylated at the C-terminus by CK2. As to expression, ubiquitously expressed, with highest levels in skin.

The protein localises to the endoplasmic reticulum membrane. The enzyme catalyses sphinganine + octadecanoyl-CoA = N-(octadecanoyl)-sphinganine + CoA + H(+). It catalyses the reaction eicosanoyl-CoA + sphinganine = N-eicosanoylsphinganine + CoA + H(+). The catalysed reaction is docosanoyl-CoA + sphinganine = N-docosanoylsphinganine + CoA + H(+). It carries out the reaction tetracosanoyl-CoA + sphinganine = N-tetracosanoylsphinganine + CoA + H(+). The enzyme catalyses hexacosanoyl-CoA + sphinganine = N-hexacosanoylsphinganine + CoA + H(+). It catalyses the reaction a fatty acyl-CoA + sphing-4-enine = an N-acylsphing-4-enine + CoA + H(+). The catalysed reaction is sphing-4-enine + octadecanoyl-CoA = N-octadecanoylsphing-4-enine + CoA + H(+). It carries out the reaction hexadecasphinganine + octadecanoyl-CoA = N-octadecanoylhexadecasphinganine + CoA + H(+). The protein operates within lipid metabolism; sphingolipid metabolism. Ceramide synthase that catalyzes formation of ceramide from sphinganine and acyl-CoA substrates, with high selectivity toward long and very-long chains (C18:0-C22:0) as acyl donor. The polypeptide is Ceramide synthase 4 (Mus musculus (Mouse)).